The chain runs to 312 residues: MLHHEDESSPESDSDFDASELTDKELQEAFSQGKLKPGLNVVLEGKKKPFNDASGLKQSLKDLKNELPWVERLDVTVDPVVDTTGQNGQTDPNTSDINAEDDFQREMCFYRQAQAAVLYSLPRLRKLKVATKRPDDYFAEMAKTDQHMQKIRHKLQLKQASMEKSEKAKQLRALRKYGKKVQVEVLQKRQKEKSAMVTQIKKYQKGLSDKLDFLEGDQTPKKTPNKTGGSAAAQKAKNTPSAKRRYKDQKFGFGGKKKGSKGNTKGSYNDVSGFRGSVAHGKGPHRPGKKGGKNANKRPGKNVRQKMKSKRR.

The disordered stretch occupies residues 1 to 32 (MLHHEDESSPESDSDFDASELTDKELQEAFSQ). Over residues 8–20 (SSPESDSDFDASE) the composition is skewed to acidic residues. Residues 140-176 (EMAKTDQHMQKIRHKLQLKQASMEKSEKAKQLRALRK) are a coiled coil. Positions 211-312 (LDFLEGDQTP…VRQKMKSKRR (102 aa)) are disordered. Residues 282–312 (KGPHRPGKKGGKNANKRPGKNVRQKMKSKRR) are compositionally biased toward basic residues.

This sequence belongs to the EBP2 family.

It is found in the nucleus. The protein resides in the nucleolus. Required for the processing of the 27S pre-rRNA. This chain is Probable rRNA-processing protein EBP2 (ebna1bp2), found in Xenopus laevis (African clawed frog).